A 371-amino-acid polypeptide reads, in one-letter code: D-alanine--D-alanine ligase (371 aa).

The 208-residue stretch at 154–361 (KKLLVAEGLP…YPTLLAAMVD (208 aa)) folds into the ATP-grasp domain. 182–237 (RERLGLPVFVKPARGGSSIGVSRVSDWAELPAAIEAARRHDPKVIVEAGIAGRELE) serves as a coordination point for ATP. Residues aspartate 316, glutamate 328, and asparagine 330 each coordinate Mg(2+).

Belongs to the D-alanine--D-alanine ligase family. Mg(2+) serves as cofactor. It depends on Mn(2+) as a cofactor.

The protein resides in the cytoplasm. The enzyme catalyses 2 D-alanine + ATP = D-alanyl-D-alanine + ADP + phosphate + H(+). It functions in the pathway cell wall biogenesis; peptidoglycan biosynthesis. Its function is as follows. Cell wall formation. The chain is D-alanine--D-alanine ligase from Mycobacterium sp. (strain KMS).